The primary structure comprises 276 residues: uncharacterized protein (276 aa).

This sequence to E.cuniculi ECU05_1600/ECU11_0130.

This is an uncharacterized protein from Encephalitozoon cuniculi (strain GB-M1) (Microsporidian parasite).